A 378-amino-acid chain; its full sequence is S-adenosylmethionine:tRNA ribosyltransferase-isomerase (378 aa).

This sequence belongs to the QueA family. Monomer.

It localises to the cytoplasm. It carries out the reaction 7-aminomethyl-7-carbaguanosine(34) in tRNA + S-adenosyl-L-methionine = epoxyqueuosine(34) in tRNA + adenine + L-methionine + 2 H(+). It participates in tRNA modification; tRNA-queuosine biosynthesis. In terms of biological role, transfers and isomerizes the ribose moiety from AdoMet to the 7-aminomethyl group of 7-deazaguanine (preQ1-tRNA) to give epoxyqueuosine (oQ-tRNA). The polypeptide is S-adenosylmethionine:tRNA ribosyltransferase-isomerase (Prochlorococcus marinus (strain MIT 9312)).